A 422-amino-acid polypeptide reads, in one-letter code: Protein IQ-DOMAIN 5 (422 aa).

Positions 23–30 match the Nuclear localization signal motif; the sequence is SKKDENVK. IQ domains follow at residues 87 to 115, 116 to 138, and 139 to 164; these read ENRA…GLVR, LQAL…CMQA, and LVRV…TSQQ. Positions 137–151 are calmodulin-binding; sequence QALVRVQARVRARRV. The tract at residues 269–422 is disordered; that stretch reads GENGMEQSEN…NSDPIKQRLA (154 aa). Residues 273 to 308 show a composition bias toward polar residues; it reads MEQSENVPKTQIKSVSKMPNTSNLVSGVSSQMTGPC. Positions 310 to 327 are enriched in low complexity; the sequence is SDGDSSSPGISSSIPVVS. Residues 355-371 are compositionally biased toward basic and acidic residues; it reads NPKERSREPNRSSKERL. Over residues 373 to 387 the composition is skewed to polar residues; sequence LPNSGKSLGSQSTKA. The segment covering 412 to 422 has biased composition (basic and acidic residues); that stretch reads RNSDPIKQRLA.

This sequence belongs to the IQD family. As to quaternary structure, binds to multiple calmodulin (CaM) in the presence of Ca(2+) and CaM-like proteins. In terms of tissue distribution, expressed mostly in vegetative tissues including older parts of the root, cotyledons, leaves and shoot apical meristems (SAM). Present at low levels in pollen, siliques and seeds.

The protein localises to the nucleus. The protein resides in the cytoplasm. Its subcellular location is the cytoskeleton. It is found in the spindle. It localises to the phragmoplast. Its function is as follows. May be involved in cooperative interactions with calmodulins or calmodulin-like proteins. Recruits calmodulin (CaM) calcium sensor proteins to cortical microtubule arrays, thus being a potential scaffold in cellular signaling and trafficking. Binds to microtubules (MTs) and promotes MT assembly and dynamics to modulate pavement cell (PC) morphogenesis via cellulose deposition-dependent anisotropic cell expansion triggered by cellulose synthase complexes (CSCs). May associate with nucleic acids and regulate gene expression at the transcriptional or post-transcriptional level. The protein is Protein IQ-DOMAIN 5 of Arabidopsis thaliana (Mouse-ear cress).